A 37-amino-acid chain; its full sequence is Large ribosomal subunit protein bL36c (37 aa).

Belongs to the bacterial ribosomal protein bL36 family.

It localises to the plastid. The protein resides in the chloroplast. The polypeptide is Large ribosomal subunit protein bL36c (Angiopteris evecta (Mule's foot fern)).